The sequence spans 359 residues: Phospho-N-acetylmuramoyl-pentapeptide-transferase (359 aa).

10 helical membrane-spanning segments follow: residues phenylalanine 24 to phenylalanine 44, phenylalanine 72 to leucine 92, threonine 100 to valine 120, methionine 134 to isoleucine 154, leucine 170 to asparagine 190, glycine 197 to alanine 217, alanine 234 to phenylalanine 254, methionine 261 to methionine 281, isoleucine 289 to phenylalanine 309, and lysine 336 to leucine 356.

Belongs to the glycosyltransferase 4 family. MraY subfamily. Mg(2+) is required as a cofactor.

Its subcellular location is the cell inner membrane. The enzyme catalyses UDP-N-acetyl-alpha-D-muramoyl-L-alanyl-gamma-D-glutamyl-meso-2,6-diaminopimeloyl-D-alanyl-D-alanine + di-trans,octa-cis-undecaprenyl phosphate = di-trans,octa-cis-undecaprenyl diphospho-N-acetyl-alpha-D-muramoyl-L-alanyl-D-glutamyl-meso-2,6-diaminopimeloyl-D-alanyl-D-alanine + UMP. It functions in the pathway cell wall biogenesis; peptidoglycan biosynthesis. Its function is as follows. Catalyzes the initial step of the lipid cycle reactions in the biosynthesis of the cell wall peptidoglycan: transfers peptidoglycan precursor phospho-MurNAc-pentapeptide from UDP-MurNAc-pentapeptide onto the lipid carrier undecaprenyl phosphate, yielding undecaprenyl-pyrophosphoryl-MurNAc-pentapeptide, known as lipid I. The chain is Phospho-N-acetylmuramoyl-pentapeptide-transferase from Hydrogenobaculum sp. (strain Y04AAS1).